Consider the following 187-residue polypeptide: MRLVLLGPPGSGKGTQATRLKDTFEIPHISTGDLLRAEVAAGSPLGLKAKEVMARGDLVSDDILLGMLEARLGQADVAKGFILDGYPRNVAQANALCALLSKIGQPLDAVVQLDVASELLVERIAGRAKAEGREDDNPESVRKRLQVYTDSTAPVIGFYEQRGKLTRVDGVGSLDEVLERIRKALGR.

10-15 (GSGKGT) provides a ligand contact to ATP. The NMP stretch occupies residues 30–59 (STGDLLRAEVAAGSPLGLKAKEVMARGDLV). Residues T31, R36, 57 to 59 (DLV), 85 to 88 (GYPR), and Q92 contribute to the AMP site. An LID region spans residues 126–136 (GRAKAEGREDD). R127 contacts ATP. AMP contacts are provided by R133 and R144. G172 serves as a coordination point for ATP.

It belongs to the adenylate kinase family. In terms of assembly, monomer.

Its subcellular location is the cytoplasm. The enzyme catalyses AMP + ATP = 2 ADP. It participates in purine metabolism; AMP biosynthesis via salvage pathway; AMP from ADP: step 1/1. Catalyzes the reversible transfer of the terminal phosphate group between ATP and AMP. Plays an important role in cellular energy homeostasis and in adenine nucleotide metabolism. The polypeptide is Adenylate kinase (Xanthomonas oryzae pv. oryzae (strain MAFF 311018)).